Here is a 122-residue protein sequence, read N- to C-terminus: Protein preY, mitochondrial (122 aa).

The transit peptide at 1-40 (MLAVRAWGRTYNTLVQRKLNAACPTGALPAVTLRPLHCSL) directs the protein to the mitochondrion. In terms of domain architecture, TRM112 spans 56-102 (DPTLLQFLVCPLSRKSLRYEESTNELINDELGIAYPIVDGIPNMIPQ).

The protein belongs to the PREY family.

Its subcellular location is the mitochondrion. In terms of biological role, in mitochondria, S-adenosylmethionine-dependent methyltransferase chaperone that supports both coenzyme Q biosynthesis and NADH:ubiquinone oxidoreductase complex (complex I, MT-ND1) assembly. This Xenopus tropicalis (Western clawed frog) protein is Protein preY, mitochondrial (pyurf).